The following is a 99-amino-acid chain: Integration host factor subunit alpha (99 aa).

Belongs to the bacterial histone-like protein family. In terms of assembly, heterodimer of an alpha and a beta chain.

In terms of biological role, this protein is one of the two subunits of integration host factor, a specific DNA-binding protein that functions in genetic recombination as well as in transcriptional and translational control. This chain is Integration host factor subunit alpha (ihfA), found in Xylella fastidiosa (strain 9a5c).